Reading from the N-terminus, the 161-residue chain is Transcription elongation factor GreA (161 aa).

A coiled-coil region spans residues 43 to 68 (SENAEYEAAREKQAFVEARIKHLEDI).

It belongs to the GreA/GreB family.

In terms of biological role, necessary for efficient RNA polymerase transcription elongation past template-encoded arresting sites. The arresting sites in DNA have the property of trapping a certain fraction of elongating RNA polymerases that pass through, resulting in locked ternary complexes. Cleavage of the nascent transcript by cleavage factors such as GreA or GreB allows the resumption of elongation from the new 3'terminus. GreA releases sequences of 2 to 3 nucleotides. The sequence is that of Transcription elongation factor GreA from Rickettsia bellii (strain OSU 85-389).